Here is a 396-residue protein sequence, read N- to C-terminus: Acyl-[acyl-carrier-protein] desaturase, chloroplastic (396 aa).

The N-terminal 33 residues, 1–33 (MALKFHPLTSQSPKLPSFRMPQLASLRSPKFVM), are a transit peptide targeting the chloroplast. Fe cation-binding residues include E138, E176, H179, E229, E262, and H265.

Belongs to the fatty acid desaturase type 2 family. In terms of assembly, homodimer. It depends on Fe(2+) as a cofactor.

It is found in the plastid. Its subcellular location is the chloroplast. It functions in the pathway lipid metabolism; fatty acid metabolism. Introduces a cis double bond in the acyl chain of an acyl-[acyl-carrier protein]. The protein is Acyl-[acyl-carrier-protein] desaturase, chloroplastic of Cucumis sativus (Cucumber).